Consider the following 274-residue polypeptide: Bis(5'-nucleosyl)-tetraphosphatase, symmetrical (274 aa).

The protein belongs to the Ap4A hydrolase family.

It carries out the reaction P(1),P(4)-bis(5'-adenosyl) tetraphosphate + H2O = 2 ADP + 2 H(+). Functionally, hydrolyzes diadenosine 5',5'''-P1,P4-tetraphosphate to yield ADP. In Buchnera aphidicola subsp. Acyrthosiphon pisum (strain 5A), this protein is Bis(5'-nucleosyl)-tetraphosphatase, symmetrical.